The primary structure comprises 705 residues: Dolichyl-diphosphooligosaccharide--protein glycosyltransferase subunit STT3A (705 aa).

The Cytoplasmic segment spans residues 1 to 17; sequence MTKLGFLRLSYEKQDTL. A helical transmembrane segment spans residues 18–38; it reads LKLLILSMAAVLSFSTRLFAV. The Lumenal portion of the chain corresponds to 39-119; it reads LRFESVIHEF…IDIRNVCVFL (81 aa). The DXD motif 1 signature appears at 47–49; the sequence is EFD. Residue Asp-49 coordinates Mn(2+). Residues 120–138 form a helical membrane-spanning segment; that stretch reads APLFSSFTTIVTYHLTKEL. Residues 139-140 lie on the Cytoplasmic side of the membrane; sequence KD. A helical transmembrane segment spans residues 141–158; it reads AGAGLLAAAMIAVVPGYI. At 159-169 the chain is on the lumenal side; the sequence is SRSVAGSYDNE. Mn(2+) contacts are provided by Asp-167 and Glu-169. The DXD motif 2 motif lies at 167–169; the sequence is DNE. A helical membrane pass occupies residues 170 to 189; sequence GIAIFCMLLTYYMWIKAVKT. Residues 190–191 are Cytoplasmic-facing; that stretch reads GS. Residues 192–206 traverse the membrane as a helical segment; that stretch reads IYWAAKCALAYFYMV. Topologically, residues 207–211 are lumenal; it reads SSWGG. The chain crosses the membrane as a helical span at residues 212 to 228; the sequence is YVFLINLIPLHVLVLML. Topologically, residues 229-233 are cytoplasmic; that stretch reads TGRFS. Residues 234-259 form a helical membrane-spanning segment; that stretch reads HRIYVAYCTVYCLGTILSMQISFVGF. The Lumenal portion of the chain corresponds to 260–267; the sequence is QPVLSSEH. A helical membrane pass occupies residues 268–287; that stretch reads MAAFGVFGLCQIHAFVDYLR. The Cytoplasmic portion of the chain corresponds to 288-300; that stretch reads SKLNPQQFEVLFR. The chain crosses the membrane as a helical span at residues 301–321; that stretch reads SVISLVGFVLLTVGALLMLTG. The Lumenal portion of the chain corresponds to 322 to 356; it reads KISPWTGRFYSLLDPSYAKNNIPIIASVSEHQPTT. An SVSE motif motif is present at residues 348 to 351; sequence SVSE. Residues 357 to 379 form a helical membrane-spanning segment; that stretch reads WSSYYFDLQLLVFMFPVGLYYCF. Residues 380–385 lie on the Cytoplasmic side of the membrane; it reads SNLSDA. The helical transmembrane segment at 386 to 402 threads the bilayer; sequence RIFIIMYGVTSMYFSAV. Residues 403-406 lie on the Lumenal side of the membrane; the sequence is MVRL. Arg-405 contributes to the dolichyl diphosphooligosaccharide binding site. A helical membrane pass occupies residues 407–428; the sequence is MLVLAPVMCILSGIGVSQVLST. The Cytoplasmic segment spans residues 429–453; sequence YMKNLDISRPDKKSKKQQDSTYPIK. A helical transmembrane segment spans residues 454–473; sequence NEVASGMILVMAFFLITYTF. The Lumenal portion of the chain corresponds to 474–705; it reads HSTWVTSEAY…DLDNRGLSRT (232 aa). The interval 525–527 is interacts with target acceptor peptide in protein substrate; sequence WWD. The WWDYG motif signature appears at 525 to 529; the sequence is WWDYG. Tyr-530 lines the dolichyl diphosphooligosaccharide pocket. Asn-537 and Asn-544 each carry an N-linked (GlcNAc...) asparagine glycan. N-linked (GlcNAc...) (high mannose) asparagine glycosylation occurs at Asn-548. The DK motif signature appears at 592–599; that stretch reads DINKFLWM.

The protein belongs to the STT3 family. As to quaternary structure, component of the oligosaccharyltransferase (OST) complex. There are 2 OST complexes, OST-A and OST-B, which contain STT3A or STT3B as catalytic subunit, respectively. OST-A and OST-B contain common core subunits RPN1, RPN2, OST48, OST4, DAD1 and TMEM258, and OST-A contains DC2/OSTC and KRTCAP2/KCP2 specific accessory subunits. OST-A complex assembly occurs through the formation of 3 subcomplexes. Subcomplex 1 contains RPN1 and TMEM258, subcomplex 2 contains the OST-A-specific subunits STT3A, DC2/OSTC, and KCP2 as well as the core subunit OST4, and subcomplex 3 contains RPN2, DAD1, and OST48. The OST-A complex can form stable complexes with the Sec61 complex or with both the Sec61 and TRAP complexes. The cofactor is Mg(2+). It depends on Mn(2+) as a cofactor.

The protein resides in the endoplasmic reticulum. It localises to the endoplasmic reticulum membrane. It catalyses the reaction a di-trans,poly-cis-dolichyl diphosphooligosaccharide + L-asparaginyl-[protein] = N(4)-(oligosaccharide-(1-&gt;4)-N-acetyl-beta-D-glucosaminyl-(1-&gt;4)-N-acetyl-beta-D-glucosaminyl)-L-asparaginyl-[protein] + a di-trans,poly-cis-dolichyl diphosphate + H(+). It participates in protein modification; protein glycosylation. Catalytic subunit of the oligosaccharyl transferase (OST) complex that catalyzes the initial transfer of a defined glycan (Glc(3)Man(9)GlcNAc(2) in eukaryotes) from the lipid carrier dolichol-pyrophosphate to an asparagine residue within an Asn-X-Ser/Thr consensus motif in nascent polypeptide chains, the first step in protein N-glycosylation. N-glycosylation occurs cotranslationally and the complex associates with the Sec61 complex at the channel-forming translocon complex that mediates protein translocation across the endoplasmic reticulum (ER). All subunits are required for a maximal enzyme activity. This subunit contains the active site and the acceptor peptide and donor lipid-linked oligosaccharide (LLO) binding pockets. STT3A is present in the majority of OST complexes and mediates cotranslational N-glycosylation of most sites on target proteins, while STT3B-containing complexes are required for efficient post-translational glycosylation and mediate glycosylation of sites that have been skipped by STT3A. STT3A-containing OST-A complex is also required to prevent hyperglycosylation of some target proteins by preventing glycosylation of facultative sites before folding of target proteins is completed. The sequence is that of Dolichyl-diphosphooligosaccharide--protein glycosyltransferase subunit STT3A from Mus musculus (Mouse).